The sequence spans 1064 residues: Protein NLRC3 (1064 aa).

Residues 138-459 (RVSLTIGVAG…YCFIHLSLQE (322 aa)) form the NACHT domain. Residue 144 to 151 (GVAGVGKT) coordinates ATP. LRR repeat units lie at residues 338–362 (LGHLYRTRLAVQDIELPLPQTLCEL), 570–593 (LSELRHTELACSVEEAMRSGTLAG), 632–662 (LPQLLYCQSLRLDNNQFQDPVMELLGSVLSG), 664–687 (DCRIRKISLAENQIGNKGAKALAR), 692–715 (NRSLITLDLRSNSIGPPGAKALAD), 720–743 (NRTLTSLSLQSNVIKDDGVMCVAE), 748–771 (NQTISMLQLQKNLIGLIGAQQMAD), 776–799 (NRSLKALMFSSNTIGDRGAIALAE), 804–827 (NQILENLDLQSNSISDMGVTVLMR), 832–855 (NQTLSSLNLRENSISPEGAQALTQ), 860–883 (NNTLKHLDLTANLLHDRGAQAIAV), 888–911 (NHSLTHLHLQWNFIQAGAARALGQ), 916–939 (NRTLTTLDLQENAIGDEGASSVAG), 972–995 (NRTLEILDLRGNDVGAAGAKALAN), 1000–1022 (NSSLRRLNLQENSLGMDGAIFVA), and 1028–1051 (NHGLHHINLQGNPIGESAARMISE).

This sequence belongs to the NLRP family. In terms of assembly, directly interacts (via CARD) with TMEM173/STING; this interaction reduces TMEM173 trafficking to the perinuclear region in response to interferon stimulatory DNA. Also interacts, but to a lesser extent, with TBK1. Interacts with TRAF6; this interaction results in decreased TRAF6 'Lys-63'-linked polyubiquitination, but leaves 'Lys-48'-linked chains unchanged, promoting TRAF6 protein degradation. Interacts with PIK3R1/PIK3R2; this interaction disrupts the association between PIK3R1/PIK3R2 and the p110 catalytic subunit PIK3CA/PIK3CB/PIK3CD and reduces PIK3R1/PIK3R2 activation. Weakly interacts with PYCARD/ASC. Interacts with CASP1 and CASP5. As to expression, expressed in bone marrow-derived macrophages.

The protein localises to the cytoplasm. In terms of biological role, negative regulator of the innate immune response. Attenuates signaling pathways activated by Toll-like receptors (TLRs) and the DNA sensor STING/TMEM173 in response to pathogen-associated molecular patterns, such as intracellular poly(dA:dT), but not poly(I:C), or in response to DNA virus infection, including that of Herpes simplex virus 1 (HSV1). May affect TLR4 signaling by acting at the level of TRAF6 ubiquitination, decreasing the activating 'Lys-63'-linked ubiquitination and leaving unchanged the degradative 'Lys-48'-linked ubiquitination. Inhibits the PI3K-AKT-mTOR pathway possibly by directly interacting with the posphatidylinositol 3-kinase regulatory subunit p85 (PIK3R1/PIK3R2) and disrupting the association between PIK3R1/PIK3R2 and the catalytic subunit p110 (PIK3CA/PIK3CB/PIK3CD) and reducing PIK3R1/PIK3R2 activation. Via its regulation of the PI3K-AKT-mTOR pathway, controls cell proliferation, predominantly in intestinal epithelial cells. May also affect NOD1- or NOD2-mediated NF-kappa-B activation. Might also affect the inflammatory response by preventing NLRP3 inflammasome formation, CASP1 cleavage and IL1B maturation. This is Protein NLRC3 (Nlrc3) from Mus musculus (Mouse).